The primary structure comprises 267 residues: MEMRQPAVAGQFYPLHCENLEKELTRCFEGLEIREREVFGAVCPHAGYIYSGKVAAHVYATLPEADTYVLFGPNHTGYGSPVSLSRETWKTPLGTIDVDLELADGFLGSIVDTDELGHTYEHSIEVQLPFLQYRFGRDFKILPICMGMQDKDTAVEVGSLVADLVSESGKRAVIIASSDFTHYETAEHARETDSEVIDAILKLDVPGMYDSLYRRNASVCGYGPIAAMLSASQKLGGSRATLLEYANSGDVSGDMSAVVGYAAIIVE.

The protein belongs to the MEMO1 family.

The sequence is that of MEMO1 family protein MA_0601 from Methanosarcina acetivorans (strain ATCC 35395 / DSM 2834 / JCM 12185 / C2A).